The following is a 509-amino-acid chain: Methionine--tRNA ligase (509 aa).

The 'HIGH' region motif lies at 12-22 (YYPSGDLHLGH). A 'KMSKS' region motif is present at residues 302–306 (KMSKS). Position 305 (lysine 305) interacts with ATP.

Belongs to the class-I aminoacyl-tRNA synthetase family. MetG type 2B subfamily. Monomer.

The protein resides in the cytoplasm. The enzyme catalyses tRNA(Met) + L-methionine + ATP = L-methionyl-tRNA(Met) + AMP + diphosphate. Is required not only for elongation of protein synthesis but also for the initiation of all mRNA translation through initiator tRNA(fMet) aminoacylation. This chain is Methionine--tRNA ligase (metG), found in Mycoplasmopsis pulmonis (strain UAB CTIP) (Mycoplasma pulmonis).